Reading from the N-terminus, the 309-residue chain is tRNA dimethylallyltransferase (309 aa).

Residue 9–16 (GPTAIGKT) coordinates ATP. Residue 11–16 (TAIGKT) coordinates substrate. 2 interaction with substrate tRNA regions span residues 34–37 (DSRQ) and 164–168 (QRMMR).

It belongs to the IPP transferase family. In terms of assembly, monomer. The cofactor is Mg(2+).

The enzyme catalyses adenosine(37) in tRNA + dimethylallyl diphosphate = N(6)-dimethylallyladenosine(37) in tRNA + diphosphate. Its function is as follows. Catalyzes the transfer of a dimethylallyl group onto the adenine at position 37 in tRNAs that read codons beginning with uridine, leading to the formation of N6-(dimethylallyl)adenosine (i(6)A). This Flavobacterium johnsoniae (strain ATCC 17061 / DSM 2064 / JCM 8514 / BCRC 14874 / CCUG 350202 / NBRC 14942 / NCIMB 11054 / UW101) (Cytophaga johnsonae) protein is tRNA dimethylallyltransferase.